The primary structure comprises 1006 residues: Kinesin-like protein KIN-5C (1006 aa).

The Kinesin motor domain maps to N9–I355. G95–T102 is an ATP binding site. Residues I371 to R522 are a coiled coil.

This sequence belongs to the TRAFAC class myosin-kinesin ATPase superfamily. Kinesin family. KIN-5/BimC subfamily.

Its subcellular location is the cytoplasm. It localises to the cytoskeleton. The protein resides in the spindle. Functionally, responsible for microtubule translocation. May be important for the organization of phragmoplast-specific arrays of microtubules. Plays an essential role in stabilizing the mitotic spindle. Required during mitotic cytokinesis. The protein is Kinesin-like protein KIN-5C of Nicotiana tabacum (Common tobacco).